A 205-amino-acid chain; its full sequence is Protein N-terminal glutamine amidohydrolase (205 aa).

Active-site residues include C28, H81, and D97.

This sequence belongs to the NTAQ1 family. Monomer.

The protein resides in the cytoplasm. It localises to the cytosol. It is found in the nucleus. The catalysed reaction is N-terminal L-glutaminyl-[protein] + H2O = N-terminal L-glutamyl-[protein] + NH4(+). Its function is as follows. Mediates the side-chain deamidation of N-terminal glutamine residues to glutamate, an important step in N-end rule pathway of protein degradation. Conversion of the resulting N-terminal glutamine to glutamate renders the protein susceptible to arginylation, polyubiquitination and degradation as specified by the N-end rule. Does not act on substrates with internal or C-terminal glutamine and does not act on non-glutamine residues in any position. Does not deaminate acetylated N-terminal glutamine. With the exception of proline, all tested second-position residues on substrate peptides do not greatly influence the activity. In contrast, a proline at position 2, virtually abolishes deamidation of N-terminal glutamine. This chain is Protein N-terminal glutamine amidohydrolase, found in Homo sapiens (Human).